The following is a 741-amino-acid chain: D-(-)-3-hydroxybutyrate oligomer hydrolase (741 aa).

Positions 1–23 (MKTIQGKSPGRWYSRGMLLAAMA) are cleaved as a signal peptide. The disordered stretch occupies residues 45–68 (NGNAGGNGNNNGNNNGNTVSNTKP). Serine 338 acts as the Charge relay system in catalysis.

Belongs to the D-(-)-3-hydroxybutyrate oligomer hydrolase family.

It localises to the secreted. The catalysed reaction is (3R)-hydroxybutanoate dimer + H2O = 2 (R)-3-hydroxybutanoate + H(+). Its pathway is lipid metabolism; butanoate metabolism. In terms of biological role, participates in the degradation of poly-3-hydroxybutyrate (PHB). It works downstream of poly(3-hydroxybutyrate) depolymerase, hydrolyzing D(-)-3-hydroxybutyrate oligomers of various length (3HB-oligomers) into 3HB-monomers. The chain is D-(-)-3-hydroxybutyrate oligomer hydrolase from Ralstonia pickettii (Burkholderia pickettii).